A 193-amino-acid chain; its full sequence is Fe/S biogenesis protein NfuA (193 aa).

Cysteine 151 and cysteine 154 together coordinate [4Fe-4S] cluster.

This sequence belongs to the NfuA family. Homodimer. Requires [4Fe-4S] cluster as cofactor.

Involved in iron-sulfur cluster biogenesis. Binds a 4Fe-4S cluster, can transfer this cluster to apoproteins, and thereby intervenes in the maturation of Fe/S proteins. Could also act as a scaffold/chaperone for damaged Fe/S proteins. In Buchnera aphidicola subsp. Cinara cedri (strain Cc), this protein is Fe/S biogenesis protein NfuA.